A 68-amino-acid chain; its full sequence is Large ribosomal subunit protein eL24 (68 aa).

The Zn(2+) site is built by Cys-7, Cys-10, Cys-33, and Cys-37. The C4-type zinc finger occupies 7-37 (CDFCGRIIEPGTGKMFVKNDGTILWFCSSKC).

This sequence belongs to the eukaryotic ribosomal protein eL24 family. As to quaternary structure, part of the 50S ribosomal subunit. Forms a cluster with proteins L3 and L14. It depends on Zn(2+) as a cofactor.

In terms of biological role, binds to the 23S rRNA. The protein is Large ribosomal subunit protein eL24 of Methanopyrus kandleri (strain AV19 / DSM 6324 / JCM 9639 / NBRC 100938).